The sequence spans 293 residues: Triosephosphate isomerase (293 aa).

A substrate-binding site is contributed by Asn25–Lys27. The active-site Electrophile is His117. The active-site Proton acceptor is the Glu218.

It belongs to the triosephosphate isomerase family. Homodimer.

The protein resides in the cytoplasm. It catalyses the reaction D-glyceraldehyde 3-phosphate = dihydroxyacetone phosphate. The protein operates within carbohydrate biosynthesis; gluconeogenesis. It participates in carbohydrate degradation; glycolysis; D-glyceraldehyde 3-phosphate from glycerone phosphate: step 1/1. In terms of biological role, involved in the gluconeogenesis. Catalyzes stereospecifically the conversion of dihydroxyacetone phosphate (DHAP) to D-glyceraldehyde-3-phosphate (G3P). This chain is Triosephosphate isomerase, found in Tropheryma whipplei (strain TW08/27) (Whipple's bacillus).